The primary structure comprises 69 residues: uncharacterized protein (69 aa).

The stretch at leucine 21–lysine 64 forms a coiled coil.

This is an uncharacterized protein from Saccharomyces cerevisiae (strain ATCC 204508 / S288c) (Baker's yeast).